Reading from the N-terminus, the 155-residue chain is 6,7-dimethyl-8-ribityllumazine synthase (155 aa).

Residues tryptophan 24, 58-60 (AFE), and 82-84 (AVI) each bind 5-amino-6-(D-ribitylamino)uracil. Position 87 to 88 (87 to 88 (GT)) interacts with (2S)-2-hydroxy-3-oxobutyl phosphate. Histidine 90 serves as the catalytic Proton donor. Phenylalanine 115 lines the 5-amino-6-(D-ribitylamino)uracil pocket. Position 129 (arginine 129) interacts with (2S)-2-hydroxy-3-oxobutyl phosphate.

This sequence belongs to the DMRL synthase family. Forms an icosahedral capsid composed of 60 subunits, arranged as a dodecamer of pentamers.

It carries out the reaction (2S)-2-hydroxy-3-oxobutyl phosphate + 5-amino-6-(D-ribitylamino)uracil = 6,7-dimethyl-8-(1-D-ribityl)lumazine + phosphate + 2 H2O + H(+). It functions in the pathway cofactor biosynthesis; riboflavin biosynthesis; riboflavin from 2-hydroxy-3-oxobutyl phosphate and 5-amino-6-(D-ribitylamino)uracil: step 1/2. In terms of biological role, catalyzes the formation of 6,7-dimethyl-8-ribityllumazine by condensation of 5-amino-6-(D-ribitylamino)uracil with 3,4-dihydroxy-2-butanone 4-phosphate. This is the penultimate step in the biosynthesis of riboflavin. This is 6,7-dimethyl-8-ribityllumazine synthase from Saccharophagus degradans (strain 2-40 / ATCC 43961 / DSM 17024).